We begin with the raw amino-acid sequence, 445 residues long: Amino-acid acetyltransferase (445 aa).

The N-acetyltransferase domain maps to 299–438 (EQVRQAQIDD…QGLYNYQRNS (140 aa)).

The protein belongs to the acetyltransferase family. ArgA subfamily.

The protein resides in the cytoplasm. The catalysed reaction is L-glutamate + acetyl-CoA = N-acetyl-L-glutamate + CoA + H(+). Its pathway is amino-acid biosynthesis; L-arginine biosynthesis; N(2)-acetyl-L-ornithine from L-glutamate: step 1/4. In Vibrio atlanticus (strain LGP32) (Vibrio splendidus (strain Mel32)), this protein is Amino-acid acetyltransferase.